Consider the following 441-residue polypeptide: RUN domain-containing protein 3A (441 aa).

An interaction with RAP2A region spans residues 1-293; the sequence is MEASFVQTTM…LQLQLEEAAA (293 aa). Positions 52–184 constitute an RUN domain; sequence DDSSEEFVNF…IDFSFCLKGE (133 aa). T210 bears the Phosphothreonine mark. A disordered region spans residues 211–234; it reads DEEERHSAESSTSEDNSPEHPYLP. At S227 the chain carries Phosphoserine. Residues 262-317 are a coiled coil; it reads YLEELVRLRESQLKDLEAENRRLQLQLEEAAAQNQREKRELEGVILELQEQLTGLI. A compositionally biased stretch (polar residues) spans 367–379; that stretch reads PLSAEASLSSDSQ. Positions 367–399 are disordered; sequence PLSAEASLSSDSQRLGEGKRDEEPWGPIGKDPT. Positions 380–389 are enriched in basic and acidic residues; that stretch reads RLGEGKRDEE. A phosphoserine mark is found at S411 and S414.

Belongs to the RUNDC3 family. Interacts with the GTP-bound form of RAP2A.

In terms of biological role, may act as an effector of RAP2A in neuronal cells. In Bos taurus (Bovine), this protein is RUN domain-containing protein 3A (RUNDC3A).